The sequence spans 593 residues: Melanopsin-A (593 aa).

Topologically, residues 1–77 are extracellular; sequence MMSGAAHSVR…VDVPDHAHYT (77 aa). The chain crosses the membrane as a helical span at residues 78-98; that stretch reads IGAVILTVGITGMLGNFLVIY. Residues 99–112 are Cytoplasmic-facing; sequence AFSRSRTLRTPANL. A helical membrane pass occupies residues 113–133; the sequence is FIINLAITDFLMCATQAPIFF. Over 134–150 the chain is Extracellular; the sequence is TTSMHKRWIFGEKGCEL. A disulfide bond links cysteine 148 and cysteine 226. The helical transmembrane segment at 151-171 threads the bilayer; sequence YAFCGALFGICSMITLMVIAV. Residues 172 to 191 are Cytoplasmic-facing; it reads DRYFVITRPLASIGVLSQKR. Residues 192–212 form a helical membrane-spanning segment; sequence ALLILLVAWVYSLGWSLPPFF. Over 213 to 243 the chain is Extracellular; that stretch reads GWSAYVPEGLLTSCTWDYMTFTPSVRAYTML. The chain crosses the membrane as a helical span at residues 244–264; that stretch reads LFIFVFFIPLIVIIYCYFFIF. Over 265–300 the chain is Cytoplasmic; it reads RSIRTTNEAVGKINGDNKRDSMKRFQRLKNEWKMAK. A helical transmembrane segment spans residues 301–321; that stretch reads IALIVILMYVISWSPYSTVAL. Residues 322-336 are Extracellular-facing; the sequence is TAFAGYSDFLTPYMN. The chain crosses the membrane as a helical span at residues 337–357; sequence SVPAVIAKASAIHNPIIYAIT. N6-(retinylidene)lysine is present on lysine 344. Topologically, residues 358–593 are cytoplasmic; it reads HPKYRLAIAK…HIDNHRPQYL (236 aa). Disordered stretches follow at residues 397–449 and 547–593; these read TVTS…RQVS and RSNV…PQYL. Positions 414-449 are enriched in polar residues; it reads TGKSRLSSASDSESGWTDTEADLSSMSSRPASRQVS. Residues 581–593 show a composition bias toward basic and acidic residues; the sequence is ESGHIDNHRPQYL.

This sequence belongs to the G-protein coupled receptor 1 family. Opsin subfamily.

The protein resides in the cell membrane. In terms of biological role, photoreceptor implicated in non-image-forming responses to light. May be able to isomerize covalently bound all-trans retinal back to 11-cis retinal. In Danio rerio (Zebrafish), this protein is Melanopsin-A (opn4a).